The following is a 338-amino-acid chain: Ketol-acid reductoisomerase (NADP(+)) (338 aa).

A KARI N-terminal Rossmann domain is found at 1-181 (MKVFYDKDCD…GGGKAGIIET (181 aa)). Residues 24-27 (YGSQ), R47, and S52 each bind NADP(+). Residue H107 is part of the active site. NADP(+) is bound at residue G133. Positions 182 to 327 (NFKEETETDL…AQLRAMMPWI (146 aa)) constitute a KARI C-terminal knotted domain. Residues D190, E194, E226, and E230 each coordinate Mg(2+). S251 is a binding site for substrate.

This sequence belongs to the ketol-acid reductoisomerase family. It depends on Mg(2+) as a cofactor.

It carries out the reaction (2R)-2,3-dihydroxy-3-methylbutanoate + NADP(+) = (2S)-2-acetolactate + NADPH + H(+). It catalyses the reaction (2R,3R)-2,3-dihydroxy-3-methylpentanoate + NADP(+) = (S)-2-ethyl-2-hydroxy-3-oxobutanoate + NADPH + H(+). It participates in amino-acid biosynthesis; L-isoleucine biosynthesis; L-isoleucine from 2-oxobutanoate: step 2/4. It functions in the pathway amino-acid biosynthesis; L-valine biosynthesis; L-valine from pyruvate: step 2/4. Functionally, involved in the biosynthesis of branched-chain amino acids (BCAA). Catalyzes an alkyl-migration followed by a ketol-acid reduction of (S)-2-acetolactate (S2AL) to yield (R)-2,3-dihydroxy-isovalerate. In the isomerase reaction, S2AL is rearranged via a Mg-dependent methyl migration to produce 3-hydroxy-3-methyl-2-ketobutyrate (HMKB). In the reductase reaction, this 2-ketoacid undergoes a metal-dependent reduction by NADPH to yield (R)-2,3-dihydroxy-isovalerate. The sequence is that of Ketol-acid reductoisomerase (NADP(+)) from Acidovorax ebreus (strain TPSY) (Diaphorobacter sp. (strain TPSY)).